The primary structure comprises 619 residues: Teichoic acid poly(ribitol-phosphate) polymerase (619 aa).

This sequence belongs to the CDP-glycerol glycerophosphotransferase family.

It is found in the cell membrane. It catalyses the reaction 4-O-[1-D-ribitylphospho-(2R)-1-glycerylphospho]-N-acetyl-beta-D-mannosaminyl-(1-&gt;4)-N-acetyl-alpha-D-glucosaminyl di-trans,octa-cis-undecaprenyl diphosphate + n CDP-L-ribitol = 4-O-[(D-ribitylphospho)(n)-D-ribitylphospho-(2R)-glycerylphospho]-N-acetyl-beta-D-mannosaminyl-(1-&gt;4)-N-acetyl-alpha-D-glucosaminyl di-trans,octa-cis-undecaprenyl diphosphate + n CMP + n H(+). Its pathway is cell wall biogenesis; poly(ribitol phosphate) teichoic acid biosynthesis. Responsible for the polymerization of the main chain of the major teichoic acid by sequential transfer of ribitol phosphate units from CDP-ribitol to the glycerol phosphate attached to the disaccharide linkage unit. Synthesizes polymers of up to 40 ribitol phosphate units in length. The polypeptide is Teichoic acid poly(ribitol-phosphate) polymerase (tarL) (Bacillus spizizenii (strain ATCC 23059 / NRRL B-14472 / W23) (Bacillus subtilis subsp. spizizenii)).